A 497-amino-acid polypeptide reads, in one-letter code: Probable cytosol aminopeptidase (497 aa).

Positions 267 and 272 each coordinate Mn(2+). Residue Lys-279 is part of the active site. Mn(2+) contacts are provided by Asp-290, Asp-349, and Glu-351. Arg-353 is a catalytic residue.

Belongs to the peptidase M17 family. The cofactor is Mn(2+).

Its subcellular location is the cytoplasm. It carries out the reaction Release of an N-terminal amino acid, Xaa-|-Yaa-, in which Xaa is preferably Leu, but may be other amino acids including Pro although not Arg or Lys, and Yaa may be Pro. Amino acid amides and methyl esters are also readily hydrolyzed, but rates on arylamides are exceedingly low.. The catalysed reaction is Release of an N-terminal amino acid, preferentially leucine, but not glutamic or aspartic acids.. Functionally, presumably involved in the processing and regular turnover of intracellular proteins. Catalyzes the removal of unsubstituted N-terminal amino acids from various peptides. In Pseudomonas putida (strain ATCC 47054 / DSM 6125 / CFBP 8728 / NCIMB 11950 / KT2440), this protein is Probable cytosol aminopeptidase.